The following is a 248-amino-acid chain: Exosome complex component Rrp41 (248 aa).

It belongs to the RNase PH family. Rrp41 subfamily. As to quaternary structure, component of the archaeal exosome complex. Forms a hexameric ring-like arrangement composed of 3 Rrp41-Rrp42 heterodimers. The hexameric ring associates with a trimer of Rrp4 and/or Csl4 subunits.

The protein localises to the cytoplasm. In terms of biological role, catalytic component of the exosome, which is a complex involved in RNA degradation. Has 3'-&gt;5' exoribonuclease activity. Can also synthesize heteromeric RNA-tails. The chain is Exosome complex component Rrp41 from Thermoplasma volcanium (strain ATCC 51530 / DSM 4299 / JCM 9571 / NBRC 15438 / GSS1).